A 511-amino-acid polypeptide reads, in one-letter code: MVLPRLYTATSRAAFKAAKQSAPLLSTSWKRCMASAAQSTPITGKVTAVIGAIVDVHFEQSELPAILNALEIKTPQGKLVLEVAQHLGENTVRTIAMDGTEGLVRGEKVLDTGGPISVPVGRETLGRIINVIGEPIDERGPIKSKLRKPIHADPPSFAEQSTSAEILETGIKVVDLLAPYARGGKIGLFGGAGVGKTVFIQELINNIAKAHGGFSVFTGVGERTREGNDLYREMKETGVINLEGESKVALVFGQMNEPPGARARVALTGLTIAEYFRDEEGQDVLLFIDNIFRFTQAGSEVSALLGRIPSAVGYQPTLATDMGLLQERITTTKKGSVTSVQAVYVPADDLTDPAPATTFAHLDATTVLSRGISELGIYPAVDPLDSKSRLLDAAVVGQEHYDVASKVQETLQTYKSLQDIIAILGMDELSEQDKLTVERARKIQRFLSQPFAVAEVFTGIPGKLVRLKDTVASFKAVLEGKYDNIPEHAFYMVGGIEDVVAKAEKLAAEAN.

The N-terminal 33 residues, 1–33 (MVLPRLYTATSRAAFKAAKQSAPLLSTSWKRCM), are a transit peptide targeting the mitochondrion. At threonine 112 the chain carries Phosphothreonine. 190 to 197 (GGAGVGKT) provides a ligand contact to ATP. A Phosphothreonine modification is found at threonine 237. Position 373 is a phosphoserine (serine 373).

It belongs to the ATPase alpha/beta chains family. F-type ATPases have 2 components, CF(1) - the catalytic core - and CF(0) - the membrane proton channel. CF(1) has five subunits: alpha(3), beta(3), gamma(1), delta(1), epsilon(1). CF(0) has three main subunits: a, b and c.

It localises to the mitochondrion. The protein localises to the mitochondrion inner membrane. The enzyme catalyses ATP + H2O + 4 H(+)(in) = ADP + phosphate + 5 H(+)(out). In terms of biological role, mitochondrial membrane ATP synthase (F(1)F(0) ATP synthase or Complex V) produces ATP from ADP in the presence of a proton gradient across the membrane which is generated by electron transport complexes of the respiratory chain. F-type ATPases consist of two structural domains, F(1) - containing the extramembraneous catalytic core, and F(0) - containing the membrane proton channel, linked together by a central stalk and a peripheral stalk. During catalysis, ATP synthesis in the catalytic domain of F(1) is coupled via a rotary mechanism of the central stalk subunits to proton translocation. Subunits alpha and beta form the catalytic core in F(1). Rotation of the central stalk against the surrounding alpha(3)beta(3) subunits leads to hydrolysis of ATP in three separate catalytic sites on the beta subunits. This Saccharomyces cerevisiae (strain ATCC 204508 / S288c) (Baker's yeast) protein is ATP synthase subunit beta, mitochondrial (ATP2).